The chain runs to 459 residues: MGINNPIPRSLKSETKKAAKILASFVKPNQVFGADQVIPPDVLKRAKGLAIITILKAGFLFSGRAGSGVIVARLKDGTWSAPSAIAMAGAGAGGMVGIELTDFVFILNTQDAVKSFSEFGTITLGGNVSVSAGPLGRSAEAAASASAGGVAAVFAYSKSKGLFAGVSVEGSAIIERREANRKFYGDNCTAKMILSGRIRPPPAVDPLFRVLESRAFNYRPSNGGRGSFDDDEDDYYDDDDYYNDIPSSFSSTDASSTRPNTRSTRRRAQSGSRYTFDDDDDDDDYGTGYSRNSRLAPTNSGGSGGKLDDPSGASSYYASHRRSGTAQSRARSSRNRWADDEYDDYDDDYESGYRRGNGRDRTKDREVDDLSNRFSKSRISSASTPQTSQGRFTAPTSPSTSSPKAVALYSFAGEESGDLPFRKGDVITILKKSDSQNDWWTGRVNGREGIFPANYVELV.

Residues 219–403 (RPSNGGRGSF…APTSPSTSSP (185 aa)) are disordered. A Phosphoserine modification is found at Ser-227. Residues 229-242 (DDDEDDYYDDDDYY) are compositionally biased toward acidic residues. A compositionally biased stretch (low complexity) spans 243 to 262 (NDIPSSFSSTDASSTRPNTR). The span at 289–300 (YSRNSRLAPTNS) shows a compositional bias: polar residues. The residue at position 298 (Thr-298) is a Phosphothreonine. Residues Ser-300 and Ser-303 each carry the phosphoserine modification. The span at 340–350 (DEYDDYDDDYE) shows a compositional bias: acidic residues. Residues 351 to 371 (SGYRRGNGRDRTKDREVDDLS) are compositionally biased toward basic and acidic residues. Residues 372 to 391 (NRFSKSRISSASTPQTSQGR) are compositionally biased toward polar residues. Thr-393 carries the phosphothreonine modification. The segment covering 393–403 (TAPTSPSTSSP) has biased composition (low complexity). A phosphoserine mark is found at Ser-397, Ser-402, and Ser-416. The 60-residue stretch at 400–459 (TSSPKAVALYSFAGEESGDLPFRKGDVITILKKSDSQNDWWTGRVNGREGIFPANYVELV) folds into the SH3 domain.

The protein belongs to the SH3YL1 family. As to quaternary structure, interacts with LAS17. Phosphorylation of Ser-397 is induced 2-fold in response to mating pheromone.

The protein resides in the cytoplasm. The chain is LAS seventeen-binding protein 3 (LSB3) from Saccharomyces cerevisiae (strain YJM789) (Baker's yeast).